Here is a 271-residue protein sequence, read N- to C-terminus: Tumor necrosis factor receptor superfamily member 4 (271 aa).

Positions 1 to 19 (MYVWVQQPTAFLLLGLSLG) are cleaved as a signal peptide. The Extracellular portion of the chain corresponds to 20-210 (VTVKLNCVKD…TPTLVAPEGP (191 aa)). 2 TNFR-Cys repeats span residues 25–60 (NCVK…TVCH) and 61–102 (PCEP…DTVC). Cystine bridges form between C26–C37, C38–C51, C41–C59, C62–C76, C79–C94, C82–C102, C104–C122, and C125–C138. One copy of the TNFR-Cys 3; truncated repeat lies at 103 to 123 (QCRPGTQPRQDSSHKLGVDCV). The TNFR-Cys 4 repeat unit spans residues 124–164 (PCPPGHFSPGSNQACKPWTNCTLSGKQIRHPASNSLDTVCE). The N-linked (GlcNAc...) asparagine glycan is linked to N143. Cysteines 144 and 163 form a disulfide. A helical transmembrane segment spans residues 211-235 (AFAVILGLGLGLLAPLTVLLALYLL). Over 236 to 271 (RKAWRSPNTPKPCWGNSFRTPIQEEQTDTHFTLAKI) the chain is Cytoplasmic.

As to quaternary structure, interacts with TRAF2, TRAF3 and TRAF5. As to expression, activated T-cells.

The protein localises to the membrane. In terms of biological role, receptor for TNFSF4/OX40L/GP34. Is a costimulatory molecule implicated in long-term T-cell immunity. The chain is Tumor necrosis factor receptor superfamily member 4 (Tnfrsf4) from Rattus norvegicus (Rat).